A 566-amino-acid polypeptide reads, in one-letter code: Urease subunit alpha 2 (566 aa).

Positions 128–566 (GGVDTHIHFI…LPMAQRYFLF (439 aa)) constitute a Urease domain. Ni(2+)-binding residues include His-133, His-135, and Lys-216. Lys-216 bears the N6-carboxylysine mark. Position 218 (His-218) interacts with substrate. Residues His-245 and His-271 each coordinate Ni(2+). The Proton donor role is filled by His-319. Asp-359 contributes to the Ni(2+) binding site.

The protein belongs to the metallo-dependent hydrolases superfamily. Urease alpha subunit family. May form a heterohexamer of 3 UreC (alpha) and 3 UreAB (gamma/beta) subunits. May also form a heterotrimer of UreA (gamma), UreB (beta) and UreC (alpha) subunits. Three heterotrimers associate to form the active enzyme. The cofactor is Ni cation. In terms of processing, carboxylation allows a single lysine to coordinate two nickel ions.

Its subcellular location is the cytoplasm. It carries out the reaction urea + 2 H2O + H(+) = hydrogencarbonate + 2 NH4(+). Its pathway is nitrogen metabolism; urea degradation; CO(2) and NH(3) from urea (urease route): step 1/1. The protein is Urease subunit alpha 2 of Pseudomonas syringae pv. syringae (strain B728a).